The chain runs to 574 residues: Sulfite reductase [NADPH] hemoprotein beta-component (574 aa).

4 residues coordinate [4Fe-4S] cluster: Cys439, Cys445, Cys484, and Cys488. Siroheme is bound at residue Cys488.

Belongs to the nitrite and sulfite reductase 4Fe-4S domain family. As to quaternary structure, alpha(8)-beta(8). The alpha component is a flavoprotein, the beta component is a hemoprotein. Siroheme serves as cofactor. [4Fe-4S] cluster is required as a cofactor.

The catalysed reaction is hydrogen sulfide + 3 NADP(+) + 3 H2O = sulfite + 3 NADPH + 4 H(+). Its pathway is sulfur metabolism; hydrogen sulfide biosynthesis; hydrogen sulfide from sulfite (NADPH route): step 1/1. Component of the sulfite reductase complex that catalyzes the 6-electron reduction of sulfite to sulfide. This is one of several activities required for the biosynthesis of L-cysteine from sulfate. The sequence is that of Sulfite reductase [NADPH] hemoprotein beta-component from Paenibacillus sp. (strain JDR-2).